We begin with the raw amino-acid sequence, 35 residues long: Cupiennin-1a (35 aa).

A Glutamic acid 1-amide modification is found at E35.

The protein belongs to the cationic peptide 04 (cupiennin) family. 01 subfamily. As to quaternary structure, monomer. Interacts with CSTX-1 (AC P81694), CSTX-9 (AC P58604), and CSTX-13 (AC P83919). As to expression, expressed by the venom gland.

The protein localises to the secreted. Has antimicrobial activity against B.subtilis, E.coli, E.faecalis, P.denitrificans, P.aeruginosa, P.putida, S.aureus, and S.epidermidis. Shows insecticidal and hemolytic activities. Probably acts by disturbing membrane function with its amphipathic structure. Synergistically increases the insecticidal activity of CSTX-1 (AC P81694), CSTX-9 (AC P58604), and CSTX-13 (AC P83919) by up to 65%. Also inhibits the formation of nitric oxide by neuronal nitric oxide synthase. The sequence is that of Cupiennin-1a from Cupiennius salei (American wandering spider).